We begin with the raw amino-acid sequence, 817 residues long: TPR repeat-containing protein C19B12.01 (817 aa).

2 disordered regions span residues 276–298 (DQKSLAPSEELDPILSSEDPNHP) and 386–413 (GKSPEGVDKPENDEGLGSFLPKPQDGEN). 4 TPR repeats span residues 459–492 (LQMWDCVVMCHCSLNRQDLAVQVIKRELENDPYD), 521–554 (APAQRSLGKYYYKKGDLLQAMNCFNESLKINPLS), 555–588 (YPTWFTYGCAALELQKYDAAMEAFSRCLSINPED), and 625–658 (WRIWENYMLISVDVNKWSEVIRALRRIIEIKGKD).

The polypeptide is TPR repeat-containing protein C19B12.01 (Schizosaccharomyces pombe (strain 972 / ATCC 24843) (Fission yeast)).